A 495-amino-acid chain; its full sequence is Cysteine--tRNA ligase (495 aa).

Cysteine 29 provides a ligand contact to Zn(2+). Positions 31 to 41 (VTVYDDSHVGH) match the 'HIGH' region motif. The Zn(2+) site is built by cysteine 209, histidine 234, and glutamate 238. The 'KMSKS' region signature appears at 266-270 (KMSKS). Lysine 269 is an ATP binding site.

It belongs to the class-I aminoacyl-tRNA synthetase family. In terms of assembly, monomer. The cofactor is Zn(2+).

It localises to the cytoplasm. It carries out the reaction tRNA(Cys) + L-cysteine + ATP = L-cysteinyl-tRNA(Cys) + AMP + diphosphate. The protein is Cysteine--tRNA ligase (cysS) of Aquifex aeolicus (strain VF5).